We begin with the raw amino-acid sequence, 207 residues long: Homeobox protein BarH-like 1 (207 aa).

A DNA-binding region (homeobox) is located at residues 95-154; it reads GRRSRTVFTELQLMGLEKRFEKQKYLSTPDRIDLAESLGLSQLQVKTWYQNRRMKWKKIV. A disordered region spans residues 157–207; the sequence is GGGLESPTKPKGRPKKNSIPSSEQLSEQERAKETEKPPESPGEPSERQQEE. Residues 183–207 are compositionally biased toward basic and acidic residues; it reads EQERAKETEKPPESPGEPSERQQEE.

It belongs to the BAR homeobox family. In terms of tissue distribution, expressed predominantly in the facial primordia, developing stomach, and proximal limbs.

The protein localises to the nucleus. Its function is as follows. Transcription factor, which is involved in craniofacial development, in odontogenic region definition, and in stomach organogenesis. Binds to a regulatory module of the NCAM promoter. This chain is Homeobox protein BarH-like 1 (BARX1), found in Gallus gallus (Chicken).